The primary structure comprises 264 residues: Thymidylate synthase (264 aa).

Position 21 (Arg21) interacts with dUMP. His51 is a (6R)-5,10-methylene-5,6,7,8-tetrahydrofolate binding site. Residue 126–127 (RR) participates in dUMP binding. Cys146 serves as the catalytic Nucleophile. Residues 166–169 (RSAD), Asn177, and 207–209 (HLY) each bind dUMP. (6R)-5,10-methylene-5,6,7,8-tetrahydrofolate is bound at residue Asp169. Ala263 contacts (6R)-5,10-methylene-5,6,7,8-tetrahydrofolate.

Belongs to the thymidylate synthase family. Bacterial-type ThyA subfamily. In terms of assembly, homodimer.

It is found in the cytoplasm. It catalyses the reaction dUMP + (6R)-5,10-methylene-5,6,7,8-tetrahydrofolate = 7,8-dihydrofolate + dTMP. It participates in pyrimidine metabolism; dTTP biosynthesis. Its function is as follows. Catalyzes the reductive methylation of 2'-deoxyuridine-5'-monophosphate (dUMP) to 2'-deoxythymidine-5'-monophosphate (dTMP) while utilizing 5,10-methylenetetrahydrofolate (mTHF) as the methyl donor and reductant in the reaction, yielding dihydrofolate (DHF) as a by-product. This enzymatic reaction provides an intracellular de novo source of dTMP, an essential precursor for DNA biosynthesis. This Allorhizobium ampelinum (strain ATCC BAA-846 / DSM 112012 / S4) (Agrobacterium vitis (strain S4)) protein is Thymidylate synthase.